The sequence spans 180 residues: UPF0340 protein LL0489 (180 aa).

This sequence belongs to the UPF0340 family.

This is UPF0340 protein LL0489 (yeiF) from Lactococcus lactis subsp. lactis (strain IL1403) (Streptococcus lactis).